The chain runs to 216 residues: Small ribosomal subunit protein uS3c (216 aa).

Residues 39–109 (IRSYINRELE…SIRINVIELT (71 aa)) form the KH type-2 domain.

It belongs to the universal ribosomal protein uS3 family. In terms of assembly, part of the 30S ribosomal subunit.

The protein localises to the plastid. The protein resides in the chloroplast. The polypeptide is Small ribosomal subunit protein uS3c (rps3) (Guillardia theta (Cryptophyte)).